A 370-amino-acid chain; its full sequence is L-lysine 4-hydroxylase (370 aa).

Positions 176, 178, and 310 each coordinate Fe cation.

Belongs to the clavaminate synthase family. It depends on Fe(2+) as a cofactor.

The enzyme catalyses L-lysine + 2-oxoglutarate + O2 = (4R)-4-hydroxy-L-lysine + succinate + CO2. Alpha-ketoglutarate-dependent dioxygenase that in vitro catalyzes the regio- and stereoselective hydroxylation of L-lysine, leading to (4R)-4-hydroxy-L-lysine. To a lesser extent, can also use (3S)-3-hydroxy-L-lysine as substrate, producing the dihydroxylated product (3R,4R)-3,4-hydroxy-L-lysine. Cannot use D-lysine or L-ornithine as substrate. The sequence is that of L-lysine 4-hydroxylase from Flavobacterium johnsoniae (strain ATCC 17061 / DSM 2064 / JCM 8514 / BCRC 14874 / CCUG 350202 / NBRC 14942 / NCIMB 11054 / UW101) (Cytophaga johnsonae).